The chain runs to 338 residues: Anthranilate phosphoribosyltransferase (338 aa).

5-phospho-alpha-D-ribose 1-diphosphate is bound by residues Gly-81, 84 to 85 (GD), Thr-89, 91 to 94 (NIST), 109 to 117 (KHGNRSMVS), and Ser-121. Gly-81 contributes to the anthranilate binding site. Position 93 (Ser-93) interacts with Mg(2+). Asn-112 serves as a coordination point for anthranilate. Residue Arg-167 coordinates anthranilate. Residues Asp-226 and Glu-227 each coordinate Mg(2+).

This sequence belongs to the anthranilate phosphoribosyltransferase family. In terms of assembly, homodimer. It depends on Mg(2+) as a cofactor.

The enzyme catalyses N-(5-phospho-beta-D-ribosyl)anthranilate + diphosphate = 5-phospho-alpha-D-ribose 1-diphosphate + anthranilate. It participates in amino-acid biosynthesis; L-tryptophan biosynthesis; L-tryptophan from chorismate: step 2/5. Catalyzes the transfer of the phosphoribosyl group of 5-phosphorylribose-1-pyrophosphate (PRPP) to anthranilate to yield N-(5'-phosphoribosyl)-anthranilate (PRA). The chain is Anthranilate phosphoribosyltransferase from Acidithiobacillus ferrooxidans (strain ATCC 23270 / DSM 14882 / CIP 104768 / NCIMB 8455) (Ferrobacillus ferrooxidans (strain ATCC 23270)).